The chain runs to 306 residues: Bifunctional protein FolD 2 (306 aa).

NADP(+) is bound by residues 169 to 171 and Ile235; that span reads GHS.

The protein belongs to the tetrahydrofolate dehydrogenase/cyclohydrolase family. Homodimer.

The enzyme catalyses (6R)-5,10-methylene-5,6,7,8-tetrahydrofolate + NADP(+) = (6R)-5,10-methenyltetrahydrofolate + NADPH. It carries out the reaction (6R)-5,10-methenyltetrahydrofolate + H2O = (6R)-10-formyltetrahydrofolate + H(+). It participates in one-carbon metabolism; tetrahydrofolate interconversion. In terms of biological role, catalyzes the oxidation of 5,10-methylenetetrahydrofolate to 5,10-methenyltetrahydrofolate and then the hydrolysis of 5,10-methenyltetrahydrofolate to 10-formyltetrahydrofolate. This chain is Bifunctional protein FolD 2, found in Mesorhizobium japonicum (strain LMG 29417 / CECT 9101 / MAFF 303099) (Mesorhizobium loti (strain MAFF 303099)).